A 229-amino-acid chain; its full sequence is Potassium/proton antiporter CemA (229 aa).

4 consecutive transmembrane segments (helical) span residues 7-27, 114-134, 154-174, and 189-209; these read LIPLLYLASIVFLPWWISLSF, IICFVILSSYSILGNEELVIL, ILLLTDLCIGFHSPHGWELMI, and IISGLVSTFPVILDTILKYWI.

It belongs to the CemA family.

It is found in the plastid. The protein localises to the chloroplast inner membrane. The catalysed reaction is K(+)(in) + H(+)(out) = K(+)(out) + H(+)(in). Functionally, contributes to K(+)/H(+) antiport activity by supporting proton efflux to control proton extrusion and homeostasis in chloroplasts in a light-dependent manner to modulate photosynthesis. Prevents excessive induction of non-photochemical quenching (NPQ) under continuous-light conditions. Indirectly promotes efficient inorganic carbon uptake into chloroplasts. In Fagus sylvatica (Beechnut), this protein is Potassium/proton antiporter CemA.